Here is a 201-residue protein sequence, read N- to C-terminus: Large ribosomal subunit protein uL4 (201 aa).

The disordered stretch occupies residues 39–67 (ARQGSRAQKTRSEVAGGGRKPWKQKGSGR).

Belongs to the universal ribosomal protein uL4 family. As to quaternary structure, part of the 50S ribosomal subunit.

One of the primary rRNA binding proteins, this protein initially binds near the 5'-end of the 23S rRNA. It is important during the early stages of 50S assembly. It makes multiple contacts with different domains of the 23S rRNA in the assembled 50S subunit and ribosome. In terms of biological role, forms part of the polypeptide exit tunnel. This chain is Large ribosomal subunit protein uL4, found in Marinomonas sp. (strain MWYL1).